The sequence spans 98 residues: QEAPKAFNQCQACHKVEAGEDGVGPSLFGLFGHKLGQAPGFKYSEAHLKFAQQTVDEPFLTKYLADPKASLPGNKMVFAGLKNPDDVKAVLAYLKTIK.

Q1 carries the post-translational modification Pyrrolidone carboxylic acid. 4 residues coordinate heme c: C10, C13, H14, and M76.

It belongs to the cytochrome c family. Post-translationally, binds 1 heme c group covalently per subunit.

Its subcellular location is the periplasm. In terms of biological role, cytochrome c2 is found mainly in purple, non-sulfur, photosynthetic bacteria where it functions as the electron donor to the oxidized bacteriochlorophyll in the photophosphorylation pathway. However, it may also have a role in the respiratory chain and is found in some non-photosynthetic bacteria. This Rhodoplanes tepidamans (Rhodoplanes cryptolactis) protein is Cytochrome c2.